Reading from the N-terminus, the 785-residue chain is Penicillin-binding protein 1A (785 aa).

Topologically, residues 1-6 (MYKSLF) are cytoplasmic. The helical; Signal-anchor for type II membrane protein transmembrane segment at 7–27 (FFLKIFAILILLGCSVTAYII) threads the bilayer. Residues 28 to 785 (YHYSHDLPDY…GISDQSQEIY (758 aa)) lie on the Periplasmic side of the membrane. A transglycosylase region spans residues 49–220 (TRIYSRDGKL…SELNPDKNYS (172 aa)). The active-site Proton donor; for transglycosylase activity is the glutamate 87. The tract at residues 398–711 (DVIVVEPIKD…SNVVLPIFID (314 aa)) is transpeptidase. The active-site Acyl-ester intermediate; for transpeptidase activity is the serine 457.

This sequence in the N-terminal section; belongs to the glycosyltransferase 51 family. The protein in the C-terminal section; belongs to the transpeptidase family.

The protein localises to the cell inner membrane. It catalyses the reaction [GlcNAc-(1-&gt;4)-Mur2Ac(oyl-L-Ala-gamma-D-Glu-L-Lys-D-Ala-D-Ala)](n)-di-trans,octa-cis-undecaprenyl diphosphate + beta-D-GlcNAc-(1-&gt;4)-Mur2Ac(oyl-L-Ala-gamma-D-Glu-L-Lys-D-Ala-D-Ala)-di-trans,octa-cis-undecaprenyl diphosphate = [GlcNAc-(1-&gt;4)-Mur2Ac(oyl-L-Ala-gamma-D-Glu-L-Lys-D-Ala-D-Ala)](n+1)-di-trans,octa-cis-undecaprenyl diphosphate + di-trans,octa-cis-undecaprenyl diphosphate + H(+). It carries out the reaction Preferential cleavage: (Ac)2-L-Lys-D-Ala-|-D-Ala. Also transpeptidation of peptidyl-alanyl moieties that are N-acyl substituents of D-alanine.. It functions in the pathway cell wall biogenesis; peptidoglycan biosynthesis. Cell wall formation. Synthesis of cross-linked peptidoglycan from the lipid intermediates. The enzyme has a penicillin-insensitive transglycosylase N-terminal domain (formation of linear glycan strands) and a penicillin-sensitive transpeptidase C-terminal domain (cross-linking of the peptide subunits). This chain is Penicillin-binding protein 1A (mrcA), found in Rickettsia typhi (strain ATCC VR-144 / Wilmington).